The primary structure comprises 136 residues: ATP synthase epsilon chain (136 aa).

Belongs to the ATPase epsilon chain family. F-type ATPases have 2 components, CF(1) - the catalytic core - and CF(0) - the membrane proton channel. CF(1) has five subunits: alpha(3), beta(3), gamma(1), delta(1), epsilon(1). CF(0) has three main subunits: a, b and c.

It is found in the cellular thylakoid membrane. Its function is as follows. Produces ATP from ADP in the presence of a proton gradient across the membrane. This is ATP synthase epsilon chain (atpC) from Prochloron didemni.